Reading from the N-terminus, the 130-residue chain is Small ribosomal subunit protein uS9 (130 aa).

The disordered stretch occupies residues 99–130 (KRAGLLTRDPRMKERKKPGLKAARRSPQFSKR). The segment covering 111-130 (KERKKPGLKAARRSPQFSKR) has biased composition (basic residues).

The protein belongs to the universal ribosomal protein uS9 family.

The protein is Small ribosomal subunit protein uS9 of Staphylococcus aureus (strain Mu3 / ATCC 700698).